Consider the following 213-residue polypeptide: ATP phosphoribosyltransferase (213 aa).

It belongs to the ATP phosphoribosyltransferase family. Short subfamily. Heteromultimer composed of HisG and HisZ subunits.

It is found in the cytoplasm. It carries out the reaction 1-(5-phospho-beta-D-ribosyl)-ATP + diphosphate = 5-phospho-alpha-D-ribose 1-diphosphate + ATP. Its pathway is amino-acid biosynthesis; L-histidine biosynthesis; L-histidine from 5-phospho-alpha-D-ribose 1-diphosphate: step 1/9. Catalyzes the condensation of ATP and 5-phosphoribose 1-diphosphate to form N'-(5'-phosphoribosyl)-ATP (PR-ATP). Has a crucial role in the pathway because the rate of histidine biosynthesis seems to be controlled primarily by regulation of HisG enzymatic activity. This Shouchella clausii (strain KSM-K16) (Alkalihalobacillus clausii) protein is ATP phosphoribosyltransferase.